The following is a 528-amino-acid chain: GMP synthase [glutamine-hydrolyzing] (528 aa).

Residues 13–204 (AIVILDFGSQ…VYDICSCEPD (192 aa)) enclose the Glutamine amidotransferase type-1 domain. The active-site Nucleophile is the Cys-90. Active-site residues include His-178 and Glu-180. The GMPS ATP-PPase domain maps to 205–403 (WTTNLFIDEA…LGLPDEIVRR (199 aa)). ATP is bound at residue 232–238 (SGGVDSS).

As to quaternary structure, homodimer.

The enzyme catalyses XMP + L-glutamine + ATP + H2O = GMP + L-glutamate + AMP + diphosphate + 2 H(+). Its pathway is purine metabolism; GMP biosynthesis; GMP from XMP (L-Gln route): step 1/1. Catalyzes the synthesis of GMP from XMP. This chain is GMP synthase [glutamine-hydrolyzing], found in Prochlorococcus marinus (strain NATL1A).